Reading from the N-terminus, the 520-residue chain is 2-isopropylmalate synthase (520 aa).

The 263-residue stretch at 12 to 274 (VVIFDTTLRD…DTGIDTTMLT (263 aa)) folds into the Pyruvate carboxyltransferase domain. Residues aspartate 21, histidine 209, histidine 211, and asparagine 245 each coordinate Mn(2+). A regulatory domain region spans residues 398–520 (KLLSLSVIAG…RLHAQHAAVV (123 aa)).

It belongs to the alpha-IPM synthase/homocitrate synthase family. LeuA type 1 subfamily. In terms of assembly, homodimer. It depends on Mn(2+) as a cofactor.

It localises to the cytoplasm. The enzyme catalyses 3-methyl-2-oxobutanoate + acetyl-CoA + H2O = (2S)-2-isopropylmalate + CoA + H(+). It functions in the pathway amino-acid biosynthesis; L-leucine biosynthesis; L-leucine from 3-methyl-2-oxobutanoate: step 1/4. In terms of biological role, catalyzes the condensation of the acetyl group of acetyl-CoA with 3-methyl-2-oxobutanoate (2-ketoisovalerate) to form 3-carboxy-3-hydroxy-4-methylpentanoate (2-isopropylmalate). The protein is 2-isopropylmalate synthase of Methylorubrum populi (strain ATCC BAA-705 / NCIMB 13946 / BJ001) (Methylobacterium populi).